A 435-amino-acid chain; its full sequence is 5-methylthioadenosine/S-adenosylhomocysteine deaminase (435 aa).

The Zn(2+) site is built by His65 and His67. The substrate site is built by Glu94, Arg150, and His189. Zn(2+) is bound at residue His216. Substrate contacts are provided by Glu219 and Asp304. Residue Asp304 coordinates Zn(2+).

This sequence belongs to the metallo-dependent hydrolases superfamily. MTA/SAH deaminase family. The cofactor is Zn(2+).

The enzyme catalyses S-adenosyl-L-homocysteine + H2O + H(+) = S-inosyl-L-homocysteine + NH4(+). It catalyses the reaction S-methyl-5'-thioadenosine + H2O + H(+) = S-methyl-5'-thioinosine + NH4(+). Its function is as follows. Catalyzes the deamination of 5-methylthioadenosine and S-adenosyl-L-homocysteine into 5-methylthioinosine and S-inosyl-L-homocysteine, respectively. Is also able to deaminate adenosine. This chain is 5-methylthioadenosine/S-adenosylhomocysteine deaminase, found in Bacillus cereus (strain G9842).